The sequence spans 462 residues: C4-dicarboxylate transport transcriptional regulatory protein DctD (462 aa).

The Response regulatory domain maps to 12–126 (QVLLIDDDPH…ALLDSVRRAL (115 aa)). 4-aspartylphosphate is present on D61. Residues 152-381 (LIGRSAGMQR…LQNAAERFAL (230 aa)) enclose the Sigma-54 factor interaction domain. ATP contacts are provided by residues 180-187 (GETGAGKE) and 243-252 (ANGGTLFLDE).

Phosphorylated by DctB.

In terms of biological role, member of the two-component regulatory system DctB/DctD, which regulates C4-dicarboxylate transport via regulation of expression of the dctPQM operon and dctA. The polypeptide is C4-dicarboxylate transport transcriptional regulatory protein DctD (Pseudomonas aeruginosa (strain ATCC 15692 / DSM 22644 / CIP 104116 / JCM 14847 / LMG 12228 / 1C / PRS 101 / PAO1)).